The chain runs to 350 residues: N-acetyllactosaminide beta-1,3-N-acetylglucosaminyltransferase 4 (350 aa).

Over 1–4 (MLPR) the chain is Cytoplasmic. Residues 5–25 (LGCVLFCSLVVLLLSCLLLLK) traverse the membrane as a helical; Signal-anchor for type II membrane protein segment. Residues 26–350 (ERIPAGSSKA…RLKCAATHKP (325 aa)) lie on the Lumenal side of the membrane. N-linked (GlcNAc...) asparagine glycans are attached at residues asparagine 53 and asparagine 166.

This sequence belongs to the glycosyltransferase 31 family.

It localises to the golgi apparatus membrane. It catalyses the reaction a beta-D-galactosyl-(1-&gt;4)-N-acetyl-beta-D-glucosaminyl derivative + UDP-N-acetyl-alpha-D-glucosamine = an N-acetyl-beta-D-glucosaminyl-(1-&gt;3)-beta-D-galactosyl-(1-&gt;4)-N-acetyl-beta-D-glucosaminyl derivative + UDP + H(+). Its pathway is protein modification; protein glycosylation. Functionally, beta-1,3-N-acetylglucosaminyltransferase involved in the synthesis of poly-N-acetyllactosamine. Has activity for type 2 oligosaccharides. The protein is N-acetyllactosaminide beta-1,3-N-acetylglucosaminyltransferase 4 (B3gnt4) of Mus musculus (Mouse).